The following is a 662-amino-acid chain: Chaperone protein dnaK1 (662 aa).

Thr198 bears the Phosphothreonine; by autocatalysis mark. Positions Asp630–Arg662 are disordered. Basic and acidic residues predominate over residues Asn649–Arg662.

Belongs to the heat shock protein 70 family.

Functionally, acts as a chaperone. This is Chaperone protein dnaK1 (dnaK1) from Parasynechococcus marenigrum (strain WH8102).